Consider the following 196-residue polypeptide: Auxin-induced protein 22B (196 aa).

The short motif at 18-22 is the EAR-like (transcriptional repression) element; it reads LRLGL. Residues 44-74 form a disordered region; it reads RQVRETSQDSVSISKASHHQQHVETVSAPPP. In terms of domain architecture, PB1 spans 99–186; sequence GIFVKVSMDG…SCKRLRIMKG (88 aa).

It belongs to the Aux/IAA family. As to quaternary structure, homodimers and heterodimers.

The protein resides in the nucleus. In terms of biological role, aux/IAA proteins are short-lived transcriptional factors that function as repressors of early auxin response genes at low auxin concentrations. Repression is thought to result from the interaction with auxin response factors (ARFs), proteins that bind to the auxin-responsive promoter element (AuxRE). Formation of heterodimers with ARF proteins may alter their ability to modulate early auxin response genes expression. In Vigna radiata var. radiata (Mung bean), this protein is Auxin-induced protein 22B (AUX22B).